We begin with the raw amino-acid sequence, 233 residues long: Demethylmenaquinone methyltransferase (233 aa).

Residues threonine 58, aspartate 79, and 106–107 each bind S-adenosyl-L-methionine; that span reads NA.

This sequence belongs to the class I-like SAM-binding methyltransferase superfamily. MenG/UbiE family.

The catalysed reaction is a 2-demethylmenaquinol + S-adenosyl-L-methionine = a menaquinol + S-adenosyl-L-homocysteine + H(+). Its pathway is quinol/quinone metabolism; menaquinone biosynthesis; menaquinol from 1,4-dihydroxy-2-naphthoate: step 2/2. Methyltransferase required for the conversion of demethylmenaquinol (DMKH2) to menaquinol (MKH2). In Bacillus velezensis (strain DSM 23117 / BGSC 10A6 / LMG 26770 / FZB42) (Bacillus amyloliquefaciens subsp. plantarum), this protein is Demethylmenaquinone methyltransferase.